The chain runs to 240 residues: UDP-2,3-diacylglucosamine hydrolase (240 aa).

Residues D8, H10, D41, N79, and H114 each contribute to the Mn(2+) site. Residue 79–80 (NR) coordinates substrate. 5 residues coordinate substrate: D122, S160, T164, K167, and H195. Residues H195 and H197 each coordinate Mn(2+).

It belongs to the LpxH family. Mn(2+) serves as cofactor.

It is found in the cell inner membrane. It carries out the reaction UDP-2-N,3-O-bis[(3R)-3-hydroxytetradecanoyl]-alpha-D-glucosamine + H2O = 2-N,3-O-bis[(3R)-3-hydroxytetradecanoyl]-alpha-D-glucosaminyl 1-phosphate + UMP + 2 H(+). The protein operates within glycolipid biosynthesis; lipid IV(A) biosynthesis; lipid IV(A) from (3R)-3-hydroxytetradecanoyl-[acyl-carrier-protein] and UDP-N-acetyl-alpha-D-glucosamine: step 4/6. Hydrolyzes the pyrophosphate bond of UDP-2,3-diacylglucosamine to yield 2,3-diacylglucosamine 1-phosphate (lipid X) and UMP by catalyzing the attack of water at the alpha-P atom. Involved in the biosynthesis of lipid A, a phosphorylated glycolipid that anchors the lipopolysaccharide to the outer membrane of the cell. This Pseudomonas paraeruginosa (strain DSM 24068 / PA7) (Pseudomonas aeruginosa (strain PA7)) protein is UDP-2,3-diacylglucosamine hydrolase.